A 354-amino-acid chain; its full sequence is Tsukushi (354 aa).

The signal sequence occupies residues 1-17 (MLCSLFLLLLAVGRVQT). Residues 18–59 (TRPCFPGCQCEEETFGLFDSFSLIRVDCSSLGPHIVPVPIPL) enclose the LRRNT domain. LRR repeat units follow at residues 60–81 (DTAH…VLAG), 86–107 (TLAG…AFSR), 110–131 (YLES…IFTS), 133–154 (PLSD…AFTT), 160–180 (ALHV…PARA), 186–207 (TIQS…RDLP), 208–228 (LRYL…AFMG), 231–253 (GLTH…GFRE), 256–277 (GLQV…EVFS), and 281–302 (LLQE…LLHH). An N-linked (GlcNAc...) asparagine glycan is attached at asparagine 75. Residue asparagine 138 is glycosylated (N-linked (GlcNAc...) asparagine). A glycan (N-linked (GlcNAc...) asparagine) is linked at asparagine 191.

Interacts with FZD4 (via FZ domain); competes with WNT2B for binding to FZD4, inhibiting Wnt signaling and repressing peripheral eye development. Interacts with TGFB1; the interaction contributes to regulation of the hair cycle. Interacts with netrin. Interacts with CCN2. Expressed in macrophages in inflamed wounds with wound expression starting 2 days post-wounding (dpw) (at protein level). At 7 dpw, expressed from epidermis and extracellular matrix in the wound edge to neoepidermis and granulation tissue and in panniculus carnosus under the granulation tissue (at protein level). After fibrosis, disappears in the dermal area at 11 dpw (at protein level). Expressed in the hair follicle during morphogenesis and the hair cycle (at protein level). In embryonic brain, strong expression in the olfactory bulb, anterior olfactory nucleus, neocortex, piriform cortex, glial wedge, midline zipper glia, indusium griseum and the area surrounding the anterior commissure (AC) but not on AC axons (at protein level). In the adult eye, expressed in retinal layers, lens epithelium, and ciliary body where it is expressed predominantly in the inner non-pigmented layer. Expressed in almost all brain regions in the embryo, in the cortex and the lateral ventricle at P0 and is restricted to the subventricular zone and lateral nucleus of the amygdala in adults. Prominent expression in hippocampal regions from early postnatal stages until postnatal day 15 and gradually declines at later stages. Expressed in almost all bone regions in the femurs of juveniles. In the inner ear, accumulates in nonprosensory regions during early embryonic stages and in both nonprosensory and prosensory regions in late embryonic stages. In the adult ear, expressed in the organ of Corti, spiral ganglion cells, and the stria vascularis. Highly expressed in the liver where it is detected primarily in hepatocytes but not in non-parenchymal cells.

It is found in the secreted. Contributes to various developmental events and other processes such as wound healing and cholesterol homeostasis through its interactions with multiple signaling pathways. Wnt signaling inhibitor which competes with WNT2B for binding to Wnt receptor FZD4 and represses WNT2B-dependent development of the peripheral eye. Plays a role in regulating the hair cycle by controlling TGFB1 signaling. Required for the development of the anterior commissure in the brain by inhibiting neurite outgrowth. Essential for terminal differentiation of hippocampal neural stem cells. Plays a role in regulating bone elongation and bone mass by modulating growth plate chondrocyte function and overall body size. Required for development of the inner ear through its involvement in stereocilia formation in inner hair cells. Facilitates wound healing by inhibiting secretion of TGFB1 from macrophages which prevents myofibroblast differentiation, maintaining inflammatory cell quiescence. Plays a role in cholesterol homeostasis by reducing circulating high-density lipoprotein cholesterol, lowering cholesterol efflux capacity and decreasing cholesterol-to-bile acid conversion in the liver. In one study, shown to negatively regulate sympathetic innervation in brown fat, leading to reduced energy expenditure. In another study, shown not to affect brown fat thermogenic capacity, body weight gain or glucose homeostasis. This is Tsukushi from Mus musculus (Mouse).